The primary structure comprises 892 residues: Smad protein daf-3 (892 aa).

Disordered regions lie at residues 1-43 and 135-161; these read MGDH…GLED and PYLD…FDTK. Residues 15 to 26 are compositionally biased toward polar residues; the sequence is IPPQFNYSQPGT. One can recognise an MH1 domain in the interval 198–347; the sequence is KIVEYLMYYR…YEIVIGTMIV (150 aa). The segment at 505 to 552 is disordered; it reads YPDFHHPFNQQPHQPPQLSQNHTSQQGSHQPGHQGQVPNDPPISRPVL. The span at 528 to 540 shows a compositional bias: low complexity; the sequence is SQQGSHQPGHQGQ. The region spanning 657–880 is the MH2 domain; that stretch reads WGTIVYYEKN…TNCFEPLGME (224 aa).

The protein belongs to the dwarfin/SMAD family. In terms of assembly, interacts with R-SMADs daf-8 and daf-14. Interacts with daf-14 in a daf-8 dependent manner. May interact with daf-5.

Its subcellular location is the cytoplasm. The protein resides in the nucleus. The protein localises to the chromosome. In terms of biological role, transcriptional regulator and common SMAD (co-SMAD), required to regulate entry into a developmentally arrested larval state known as dauer, in response to harsh environmental conditions. Probable component of transcriptional regulatory complex with SMAD protein daf-5. Acts antagonistically to SMAD signaling downstream of TGF-beta-like daf-7 signaling. Binds to the 5'-GTCTG-3' motif found in regulatory regions and may modulate the expression of genes involved in TGF-beta-like daf-7 and Notch lag-2 signaling. May regulate gene expression outside the dauer pathway. In Caenorhabditis elegans, this protein is Smad protein daf-3.